Here is a 399-residue protein sequence, read N- to C-terminus: L-methionine gamma-lyase (399 aa).

Residues 59 to 61 (YTR) and 89 to 90 (GM) contribute to the pyridoxal 5'-phosphate site. Y114 is a substrate binding site. Residue 209–211 (SAT) participates in pyridoxal 5'-phosphate binding. An N6-(pyridoxal phosphate)lysine modification is found at K212. R376 lines the substrate pocket.

The protein belongs to the trans-sulfuration enzymes family. L-methionine gamma-lyase subfamily. Homotetramer; dimer of active dimers. Pyridoxal 5'-phosphate serves as cofactor.

The enzyme catalyses L-methionine + H2O = methanethiol + 2-oxobutanoate + NH4(+). Functionally, catalyzes the alpha,gamma-elimination of L-methionine to produce methanethiol, 2-oxobutanoate and ammonia. This chain is L-methionine gamma-lyase, found in Pseudomonas deceptionensis.